Here is a 302-residue protein sequence, read N- to C-terminus: HTH-type transcriptional regulator GbpR (302 aa).

Residues 1-56 (MSHLRMLVMIEEHGQVSAAAAAMNMTQPAASRMLSEMEAIVKSPLCQRASRGVVLT) enclose the HTH lysR-type domain. A DNA-binding region (H-T-H motif) is located at residues 16–35 (VSAAAAAMNMTQPAASRMLS).

This sequence belongs to the LysR transcriptional regulatory family.

In terms of biological role, activator of the expression of chvE when bound to its inducer and represses its expression in the absence of inducer (L-arabinose, D-fucose or D-galactose). Negatively regulates its own expression. In Rhizobium radiobacter (Agrobacterium tumefaciens), this protein is HTH-type transcriptional regulator GbpR (gbpR).